Here is a 92-residue protein sequence, read N- to C-terminus: Small ribosomal subunit protein bS20 (92 aa).

The segment at Met-1–Ser-23 is disordered. Basic residues predominate over residues Ala-7–His-20.

Belongs to the bacterial ribosomal protein bS20 family.

Functionally, binds directly to 16S ribosomal RNA. The chain is Small ribosomal subunit protein bS20 from Pseudomonas entomophila (strain L48).